The sequence spans 373 residues: XK-related protein 9 (373 aa).

A run of 8 helical transmembrane segments spans residues 8–28, 38–58, 166–186, 203–223, 224–244, 256–276, 295–315, and 318–338; these read FMMS…DIWV, YVFS…AQCF, AAIM…QVAL, ITYL…VVLL, LFLN…LGII, CISM…FTFF, VLGT…IFNP, and FIPI…FLIV.

The protein belongs to the XK family. Post-translationally, undergoes proteolytic processing by caspase-3 (CASP3), caspase-6 (CASP6) and caspase-7 (CASP7) to generate the XK-related protein 9, processed form, leading to its activation.

It is found in the cell membrane. It catalyses the reaction a 1,2-diacyl-sn-glycero-3-phospho-L-serine(in) = a 1,2-diacyl-sn-glycero-3-phospho-L-serine(out). Activated upon caspase cleavage to generate the XK-related protein 9, processed form. Does not act prior the onset of apoptosis. Phospholipid scramblase that promotes phosphatidylserine exposure on apoptotic cell surface. Phosphatidylserine is a specific marker only present at the surface of apoptotic cells and acts as a specific signal for engulfment. The chain is XK-related protein 9 from Pan troglodytes (Chimpanzee).